The chain runs to 2531 residues: Probable polyketide synthase 26 (2531 aa).

The Ketosynthase family 3 (KS3) domain maps to 10-433; that stretch reads QEDIAIIGFR…GSNCCLVLTE (424 aa). Active-site for beta-ketoacyl synthase activity residues include cysteine 174, histidine 316, and histidine 356. Residues 620 to 653 form an acyl/malonyl transferase region; sequence GINPSFIVGHSLGELPMAFCSGMIDFDTVCYLLY. Serine 630 acts as the For acyl/malonyl transferase activity in catalysis. The N-terminal hotdog fold stretch occupies residues 915-1036; the sequence is MDTLGFSNEK…ANYHLSHRDD (122 aa). Positions 915–1206 constitute a PKS/mFAS DH domain; sequence MDTLGFSNEK…LKSLIPLKDP (292 aa). The active-site Proton acceptor; for dehydratase activity is histidine 948. The segment at 1055–1206 is C-terminal hotdog fold; that stretch reads NLTKLSKNQF…LKSLIPLKDP (152 aa). Aspartate 1117 functions as the Proton donor; for dehydratase activity in the catalytic mechanism. Residues 2431-2509 form the Carrier domain; sequence ASENPVKDLL…DNIKILTDSY (79 aa). O-(pantetheine 4'-phosphoryl)serine is present on serine 2468.

Requires pantetheine 4'-phosphate as cofactor.

In terms of biological role, probable polyketide synthase. The protein is Probable polyketide synthase 26 (pks26) of Dictyostelium discoideum (Social amoeba).